The chain runs to 203 residues: Large ribosomal subunit protein bL25 (203 aa).

It belongs to the bacterial ribosomal protein bL25 family. CTC subfamily. In terms of assembly, part of the 50S ribosomal subunit; part of the 5S rRNA/L5/L18/L25 subcomplex. Contacts the 5S rRNA. Binds to the 5S rRNA independently of L5 and L18.

In terms of biological role, this is one of the proteins that binds to the 5S RNA in the ribosome where it forms part of the central protuberance. In Wolbachia pipientis subsp. Culex pipiens (strain wPip), this protein is Large ribosomal subunit protein bL25.